We begin with the raw amino-acid sequence, 132 residues long: Small ribosomal subunit protein uS11 (132 aa).

Belongs to the universal ribosomal protein uS11 family. In terms of assembly, part of the 30S ribosomal subunit. Interacts with proteins S7 and S18. Binds to IF-3.

Functionally, located on the platform of the 30S subunit, it bridges several disparate RNA helices of the 16S rRNA. Forms part of the Shine-Dalgarno cleft in the 70S ribosome. This chain is Small ribosomal subunit protein uS11, found in Cyanothece sp. (strain PCC 7425 / ATCC 29141).